The sequence spans 1050 residues: Collagen alpha-2(I) chain (1050 aa).

A disordered region spans residues 1–1050 (SGGFDFSFLP…FGYEGDFYRA (1050 aa)). 4-hydroxyproline is present on residues proline 10 and proline 13. Positions 20 to 32 (RYYGVGLGPGPMG) are enriched in gly residues. Composition is skewed to low complexity over residues 33 to 46 (LMGP…SGAP) and 56 to 77 (EPGE…APGK). 2 positions are modified to 4-hydroxyproline: proline 40 and proline 46. Over residues 78-92 (AGEDGHPGKPGRPGE) the composition is skewed to basic and acidic residues. A 5-hydroxylysine; alternate modification is found at lysine 114. An O-linked (Gal...) hydroxylysine; alternate glycan is attached at lysine 114. 5 stretches are compositionally biased toward low complexity: residues 161 to 190 (VGAP…SAGP), 236 to 257 (PGAN…AGAP), 298 to 311 (EPGS…PGSS), 320 to 338 (NGES…RGNP), and 355 to 371 (PAGA…RGPS). 4-hydroxyproline occurs at positions 377 and 380. Composition is skewed to low complexity over residues 406 to 425 (LPGI…RGEA) and 452 to 467 (AGNR…NGAQ). Residues 474–483 (GVQGGKGEQG) are compositionally biased toward gly residues. Composition is skewed to low complexity over residues 530-547 (PGES…SRGP), 598-642 (VGTT…PRGS), and 649-669 (VGPA…QPGA). Residues 670 to 679 (KGERGTKGPK) show a composition bias toward basic and acidic residues. Low complexity predominate over residues 687-697 (PTGPVGSAGPA). Residues 707–716 (GSRGDGGPPG) are compositionally biased toward gly residues. The segment covering 718–727 (TGFPGAAGRT) has biased composition (low complexity). The segment covering 764-773 (GETGAGGPPG) has biased composition (gly residues). 4 stretches are compositionally biased toward low complexity: residues 781–808 (SGEP…LGLP), 816–841 (LPGV…RGPS), 881–903 (YAGN…VGPA), and 911–926 (EPGP…ALGP). Positions 936–947 (RGDKGEPGDKGP) are enriched in basic and acidic residues. Over residues 1020–1032 (SGPPGPPGPPGPP) the composition is skewed to pro residues.

It belongs to the fibrillar collagen family. Trimers of one alpha 2(I) and two alpha 1(I) chains. Interacts (via C-terminus) with TMEM131 (via PapD-L domain); the interaction is direct and is involved in assembly and TRAPPIII ER-to-Golgi transport complex-dependent secretion of collagen. In terms of processing, prolines at the third position of the tripeptide repeating unit (G-X-Y) are hydroxylated in some or all of the chains. In terms of tissue distribution, expressed in bones.

It is found in the secreted. It localises to the extracellular space. Its subcellular location is the extracellular matrix. Functionally, type I collagen is a member of group I collagen (fibrillar forming collagen). This Megatherium americanum (Giant ground sloth) protein is Collagen alpha-2(I) chain.